A 637-amino-acid polypeptide reads, in one-letter code: Formate--tetrahydrofolate ligase (637 aa).

81-88 (TPLGEGKS) contacts ATP.

It belongs to the formate--tetrahydrofolate ligase family. In terms of assembly, homodimer.

The enzyme catalyses (6S)-5,6,7,8-tetrahydrofolate + formate + ATP = (6R)-10-formyltetrahydrofolate + ADP + phosphate. The protein operates within one-carbon metabolism; tetrahydrofolate interconversion. The chain is Formate--tetrahydrofolate ligase from Spinacia oleracea (Spinach).